The chain runs to 388 residues: Galactokinase (388 aa).

33 to 36 contributes to the substrate binding site; that stretch reads EHTD. Residues Ser67 and 125-131 contribute to the ATP site; that span reads GSGLSSS. Mg(2+) contacts are provided by Ser131 and Glu163. Residue Asp175 is the Proton acceptor of the active site. Substrate is bound at residue Tyr225.

Belongs to the GHMP kinase family. GalK subfamily.

The protein localises to the cytoplasm. It carries out the reaction alpha-D-galactose + ATP = alpha-D-galactose 1-phosphate + ADP + H(+). It participates in carbohydrate metabolism; galactose metabolism. Its function is as follows. Catalyzes the transfer of the gamma-phosphate of ATP to D-galactose to form alpha-D-galactose-1-phosphate (Gal-1-P). In Lactobacillus helveticus (Lactobacillus suntoryeus), this protein is Galactokinase.